We begin with the raw amino-acid sequence, 201 residues long: Retinol-binding protein 4 (201 aa).

The signal sequence occupies residues 1-18 (MEWVWALVLLAALGGGSA). Cystine bridges form between Cys22–Cys178, Cys88–Cys192, and Cys138–Cys147. Gln116 contacts substrate. The residue at position 139 (Arg139) is an Omega-N-methylarginine.

The protein belongs to the calycin superfamily. Lipocalin family. Interacts with TTR. Interaction with TTR prevents its loss by filtration through the kidney glomeruli. Interacts with STRA6. In terms of tissue distribution, detected in blood plasma (at protein level).

The protein localises to the secreted. In terms of biological role, retinol-binding protein that mediates retinol transport in blood plasma. Delivers retinol from the liver stores to the peripheral tissues. Transfers the bound all-trans retinol to STRA6, that then facilitates retinol transport across the cell membrane. This is Retinol-binding protein 4 (Rbp4) from Rattus norvegicus (Rat).